The chain runs to 88 residues: Phosphocarrier protein HPr (88 aa).

The region spanning 1-88 is the HPr domain; that stretch reads MEQQSYTIID…DVLSKEGLTE (88 aa). His15 serves as the catalytic Pros-phosphohistidine intermediate. Phosphoserine; by HPrK/P is present on Ser46.

This sequence belongs to the HPr family.

It is found in the cytoplasm. Its activity is regulated as follows. Phosphorylation on Ser-46 inhibits the phosphoryl transfer from enzyme I to HPr. In terms of biological role, general (non sugar-specific) component of the phosphoenolpyruvate-dependent sugar phosphotransferase system (sugar PTS). This major carbohydrate active-transport system catalyzes the phosphorylation of incoming sugar substrates concomitantly with their translocation across the cell membrane. The phosphoryl group from phosphoenolpyruvate (PEP) is transferred to the phosphoryl carrier protein HPr by enzyme I. Phospho-HPr then transfers it to the PTS EIIA domain. P-Ser-HPr interacts with the catabolite control protein A (CcpA), forming a complex that binds to DNA at the catabolite response elements cre, operator sites preceding a large number of catabolite-regulated genes. Thus, P-Ser-HPr is a corepressor in carbon catabolite repression (CCR), a mechanism that allows bacteria to coordinate and optimize the utilization of available carbon sources. P-Ser-HPr also plays a role in inducer exclusion, in which it probably interacts with several non-PTS permeases and inhibits their transport activity. This is Phosphocarrier protein HPr (ptsH) from Staphylococcus carnosus.